The chain runs to 197 residues: 7-methyl-GTP pyrophosphatase (197 aa).

The active-site Proton acceptor is the Asp-69.

It belongs to the Maf family. YceF subfamily. A divalent metal cation is required as a cofactor.

Its subcellular location is the cytoplasm. It catalyses the reaction N(7)-methyl-GTP + H2O = N(7)-methyl-GMP + diphosphate + H(+). Functionally, nucleoside triphosphate pyrophosphatase that hydrolyzes 7-methyl-GTP (m(7)GTP). May have a dual role in cell division arrest and in preventing the incorporation of modified nucleotides into cellular nucleic acids. The polypeptide is 7-methyl-GTP pyrophosphatase (Syntrophotalea carbinolica (strain DSM 2380 / NBRC 103641 / GraBd1) (Pelobacter carbinolicus)).